We begin with the raw amino-acid sequence, 231 residues long: MAVFLEAKDAHSVLKRFPRANEFLEELRQGTIERECMEEICSYEEVKEVFENKEKTMEFWKGYPNAVYSVRDPSQSSDAMYVVVPLLGVALLIVIALFIIWRCQLQKATRHHPSYAQNRYLASRAGHTLPRVMVYRGTVHSQGEPSGHREAANSPQVVLGPSRGGRTTVRLESTLYLPELSLSRLSSTTPPPSYEEVTAPQESSSEEASVSYSDPPPKYEEIVAANPGADK.

A propeptide spanning residues methionine 1 to arginine 19 is cleaved from the precursor. In terms of domain architecture, Gla spans alanine 20–asparagine 65. Topologically, residues alanine 20–aspartate 78 are extracellular. 13 positions are modified to 4-carboxyglutamate: glutamate 22, glutamate 25, glutamate 26, glutamate 33, glutamate 35, glutamate 38, glutamate 39, glutamate 44, glutamate 45, glutamate 48, glutamate 51, glutamate 54, and glutamate 58. The cysteines at positions 36 and 41 are disulfide-linked. The helical transmembrane segment at alanine 79–tryptophan 101 threads the bilayer. Topologically, residues arginine 102–lysine 231 are cytoplasmic. Disordered stretches follow at residues histidine 140 to glycine 165 and leucine 182 to lysine 231. A compositionally biased stretch (low complexity) spans glutamate 202 to serine 213.

Post-translationally, gla residues are produced after subsequent post-translational modifications of glutamate by a vitamin K-dependent gamma-carboxylase. In terms of tissue distribution, expressed in brain, lung, kidney and heart.

It is found in the membrane. This chain is Transmembrane gamma-carboxyglutamic acid protein 3 (PRRG3), found in Homo sapiens (Human).